The primary structure comprises 548 residues: Frizzled-7-B (548 aa).

Positions Met1–Ser18 are cleaved as a signal peptide. Residues Ala19–Trp230 lie on the Extracellular side of the membrane. Residues Pro31–Gln150 form the FZ domain. Intrachain disulfides connect Cys36–Cys97, Cys44–Cys90, Cys81–Cys118, Cys107–Cys147, and Cys111–Cys135. N-linked (GlcNAc...) asparagine glycosylation is present at Asn50. N-linked (GlcNAc...) asparagine glycosylation occurs at Asn151. A helical membrane pass occupies residues Val231–Val251. At Asp252–Pro262 the chain is on the cytoplasmic side. A helical transmembrane segment spans residues Ile263–Leu283. Residues Glu284–Thr311 are Extracellular-facing. Residues Ile312–Ala332 form a helical membrane-spanning segment. Over Leu333–Gln353 the chain is Cytoplasmic. The helical transmembrane segment at Tyr354 to Gly374 threads the bilayer. The Extracellular portion of the chain corresponds to Gln375–Gly397. A helical transmembrane segment spans residues Phe398–Phe418. At Val419–Arg444 the chain is on the cytoplasmic side. The chain crosses the membrane as a helical span at residues Ile445 to Tyr465. Over Glu466–Thr502 the chain is Extracellular. The helical transmembrane segment at Val503 to Trp523 threads the bilayer. Topologically, residues Ser524–Val548 are cytoplasmic. The Lys-Thr-X-X-X-Trp motif, mediates interaction with the PDZ domain of Dvl family members signature appears at Lys526–Trp531. A PDZ-binding motif is present at residues Thr546–Val548.

It belongs to the G-protein coupled receptor Fz/Smo family. Interacts with wnt11 and sdc4. The extracellular domain interacts with the extracellular domain of pcdh8/papc. Interacts (via C-terminus) with dvl1 (via PDZ domain). As to expression, during gastrulation, broadly expressed on the dorsal side of the embryo in deep mesodermal cells surrounding the blastopore lip and in presumptive anterior neuroectoderm. During neurulation, localized to the cranial neural crest and heart field where expression is retained at later stages in addition to new areas of expression in the neural tube, pronephros and tailbud. At tailbud stage, expressed in the pronephric duct, and broad head expression becomes more restricted to the hindbrain. In tadpoles, strongly expressed in the eye and the pericardium and myocardium of the developing heart.

The protein resides in the cell membrane. The protein localises to the endosome membrane. In terms of biological role, receptor for Wnt proteins. Acts in both canonical and non-canonical Wnt pathways. Although different papers report differing Wnt preferences, wnt5a, wnt8b and wnt11 have been proposed as synergists. In the canonical Wnt pathway, acts via beta-catenin to promote the expression of the dorsal genes siamois, twin and nodal3 and to establish the dorsal axis of the embryo and induce dorsal mesoderm formation. In a non-canonical Wnt/planar cell polarity (PCP) pathway, acts with sdc4 and dvl2/dsh to regulate convergent extension cell movements during gastrulation. Triggers phosphorylation of dvl2/dsh and its translocation to the plasma membrane. In a third branch of Wnt signaling, acts in a non-canonical pathway via trimeric G proteins, and independently of dvl2/dsh, to recruit protein kinase C (PKC) to the membrane and thus activate PKC. PKC signaling controls cell sorting and tissue separation during gastrulation. This is Frizzled-7-B (fzd7-b) from Xenopus laevis (African clawed frog).